The following is a 237-amino-acid chain: Corrinoid adenosyltransferase MMAB (237 aa).

Residues 1–26 (MAVWLFGGRLGLRGRLSACRLLCPRF) constitute a mitochondrion transit peptide. The tract at residues 30–49 (GPQGGEDGDRLQPSSTAAKI) is disordered. Residues 54–57 (TKTG), 62–63 (SS), and K72 each bind ATP. S128 carries the post-translational modification Phosphoserine. An ATP-binding site is contributed by 184 to 188 (RRAER). K205 carries the N6-succinyllysine modification. N208 lines the ATP pocket. K224 is subject to N6-acetyllysine; alternate. K224 carries the post-translational modification N6-succinyllysine; alternate.

Belongs to the Cob(I)alamin adenosyltransferase family. Homotrimer.

Its subcellular location is the mitochondrion. The enzyme catalyses cob(I)alamin-[corrinoid adenosyltransferase] + ATP = apo-[corrinoid adenosyltransferase] + adenosylcob(III)alamin + triphosphate. Its function is as follows. Converts cob(I)alamin to adenosylcobalamin (adenosylcob(III)alamin), a coenzyme for methylmalonyl-CoA mutase, therefore participates in the final step of the vitamin B12 conversion. Generates adenosylcobalamin (AdoCbl) and directly delivers the cofactor to MUT in a transfer that is stimulated by ATP-binding to MMAB and gated by MMAA. In Mus musculus (Mouse), this protein is Corrinoid adenosyltransferase MMAB.